The primary structure comprises 737 residues: MVKKRIYELAKELGISSERVIEIAKKYDFKVTNHMSALDENEQNKIRGSISLKAKKKEHIQHNKNKDNFHSKKVQKSNTGSKDENNHKNVHKNNRKRSGSSMKENNNAKNGQRNNRNNRSNNKFKNKRNNNNKRNNNFKKGNPVPPRKNKPLPETLVYTVGMNVADIAKKIHREPAEIIKKLFMMGVMVNQNQSLDKDTIELLAADYGINAEEKVEVDVSDIDKFFEEEQNNTEHLEKRPPVVTIMGHVDHGKTTLLDKLRHTHVTEGEAGGITQHIGAYQVRHDDKIITFLDTPGHAAFTNMRARGADITDITVLVVAADDGVMPQTIEAINHAKAAGVPIIVAVNKIDKPGANPNHVMEQLTEYELIPESWGGDTIFVEISAKFGKNLDELLDMILLEAEMLELHANPNQRGAGSVIEARLDKGKGSVASLLVQQGTLHVGDPIVVGNTFGRVRTMVDARGYDIKKATPATPVEITGLNEVPDSGDRFITFEDEKTARAAGEKRAERALLKERSQTNHVTLDNLFDTLKEGELKEVGVIIKADVQGSVEALAQSFKKIDVEGVRVNIIHQAVGAINESDVTLAEASNAIIVGFNVRPTPLAKQQAESDNVDIRLHRVIYKAIDEIETAMKGMLEPEYQEKITGQVEIRQTYKVSKLGTIGGGYVIDGYIRRDSGVRVIRDGIVIYEGKLASLKRFKDDVKEVKQGYECGLMIEKYNDIKVGDQIEAYIMEEVPVD.

Positions 55–152 (KKKEHIQHNK…PVPPRKNKPL (98 aa)) are disordered. The segment covering 60–70 (IQHNKNKDNFH) has biased composition (basic and acidic residues). Residues 88 to 98 (KNVHKNNRKRS) show a composition bias toward basic residues. Residues 105-121 (NNNAKNGQRNNRNNRSN) show a composition bias toward low complexity. Basic residues predominate over residues 122–131 (NKFKNKRNNN). A compositionally biased stretch (low complexity) spans 132-142 (NKRNNNFKKGN). The 170-residue stretch at 238 to 407 (KRPPVVTIMG…LLEAEMLELH (170 aa)) folds into the tr-type G domain. Residues 247–254 (GHVDHGKT) are G1. 247-254 (GHVDHGKT) contacts GTP. The tract at residues 272 to 276 (GITQH) is G2. Residues 293-296 (DTPG) form a G3 region. GTP contacts are provided by residues 293–297 (DTPGH) and 347–350 (NKID). Residues 347–350 (NKID) are G4. The tract at residues 383-385 (SAK) is G5.

It belongs to the TRAFAC class translation factor GTPase superfamily. Classic translation factor GTPase family. IF-2 subfamily.

The protein resides in the cytoplasm. In terms of biological role, one of the essential components for the initiation of protein synthesis. Protects formylmethionyl-tRNA from spontaneous hydrolysis and promotes its binding to the 30S ribosomal subunits. Also involved in the hydrolysis of GTP during the formation of the 70S ribosomal complex. This is Translation initiation factor IF-2 from Ligilactobacillus salivarius (strain UCC118) (Lactobacillus salivarius).